Consider the following 602-residue polypeptide: UvrABC system protein C (602 aa).

In terms of domain architecture, GIY-YIG spans 17–94 (TTSGCYKMYS…IKEYKPDYNI (78 aa)). The 36-residue stretch at 199-234 (SKLLDETEIKMKEAIKKEDFEAAIKLKETKRSLIEI) folds into the UVR domain.

This sequence belongs to the UvrC family. In terms of assembly, interacts with UvrB in an incision complex.

The protein resides in the cytoplasm. Functionally, the UvrABC repair system catalyzes the recognition and processing of DNA lesions. UvrC both incises the 5' and 3' sides of the lesion. The N-terminal half is responsible for the 3' incision and the C-terminal half is responsible for the 5' incision. The polypeptide is UvrABC system protein C (Borrelia hermsii (strain HS1 / DAH)).